Consider the following 77-residue polypeptide: uncharacterized protein (77 aa).

Residues 5–74 (SYIVQLKDSV…FEPDQEMHTM (70 aa)) form the Inhibitor I9 domain.

The protein belongs to the protease inhibitor I9 family.

It localises to the cytoplasm. The protein localises to the nucleus. This is an uncharacterized protein from Schizosaccharomyces pombe (strain 972 / ATCC 24843) (Fission yeast).